The primary structure comprises 248 residues: MTTMGEDEAPALPKKSPLPEKIDEADVDDDPDDKVIKIVVVGDGASGKTSICQRFAKESFDKSYHQTLGLDFFSRRITLPHEMQVLVQVWDIGGQSIAGEMIDKYLTGANIVFLVYDVTNSKSFENAVDWLSVVKKNTKSSETPVKLVLMGNKTDLEERRVVSVEAHKNFATSNDMMPTYVSAKTGDTVFLTFRQAVAEVLNVGLSRAEVEADIEIVQGSVIEQPKQSDASYARRSDQSRSTSVCSIT.

Residues 1 to 30 (MTTMGEDEAPALPKKSPLPEKIDEADVDDD) are disordered. A GTP-binding site is contributed by 42–50 (GDGASGKTS). Positions 64 to 72 (YHQTLGLDF) match the Effector region motif. Residues 91–95 (DIGGQ), 152–155 (NKTD), and 182–184 (SAK) contribute to the GTP site. The disordered stretch occupies residues 227–248 (QSDASYARRSDQSRSTSVCSIT). Polar residues predominate over residues 239 to 248 (SRSTSVCSIT).

Belongs to the small GTPase superfamily. Rab family. As to expression, expressed in amphid and phasmid ciliated sensory neurons.

It localises to the cell projection. It is found in the cilium membrane. The protein resides in the perikaryon. The protein localises to the cytoplasm. Its subcellular location is the cytoskeleton. It localises to the cilium axoneme. GTPase. Intraflagellar transport (IFT) cargo that undergoes bidirectional IFT along the ciliary axoneme when in active GTP-bound state in amphid and phasmid ciliated sensory neurons. Targeting and function as IFT cargo may depend on the BBSome, an IFT cargo adapter. Does not undergo IFT when in inactive GDP-bound state. May in turn play a role in cilium structure and/or function in ciliated sensory neurons. In Caenorhabditis elegans, this protein is Ras-related protein Rab-28.